We begin with the raw amino-acid sequence, 249 residues long: Cytokine-inducible SH2-containing protein (249 aa).

Residues 41–64 (AFPEEPAPTFAAPEPDGSAPQTRD) are disordered. The SH2 domain occupies 84–165 (WYWGSITASE…PDVVSLIQHY (82 aa)). In terms of domain architecture, SOCS box spans 200-248 (KLLRPLGRRDSIPSLQHLCRLRINRCTTEVERLPLPRRMGDYLKQYPFQ).

Its pathway is protein modification; protein ubiquitination. SOCS family proteins form part of a classical negative feedback system that regulates cytokine signal transduction. CIS is involved in the negative regulation of cytokines that signal through the JAK-STAT5 pathway such as erythropoietin, prolactin and interleukin 3 (IL3) receptor. Inhibits STAT5 trans-activation by suppressing its tyrosine phosphorylation. May be a substrate-recognition component of a SCF-like ECS (Elongin BC-CUL2/5-SOCS-box protein) E3 ubiquitin-protein ligase complex which mediates the ubiquitination and subsequent proteasomal degradation of target proteins. The protein is Cytokine-inducible SH2-containing protein (CISH) of Gallus gallus (Chicken).